Here is a 375-residue protein sequence, read N- to C-terminus: Dual-specificity RNA methyltransferase RlmN (375 aa).

The active-site Proton acceptor is Glu-94. The Radical SAM core domain occupies 100 to 339 (EEDRATLCVS…VTVRKTRGDD (240 aa)). The cysteines at positions 107 and 344 are disulfide-linked. 3 residues coordinate [4Fe-4S] cluster: Cys-114, Cys-118, and Cys-121. Residues 168 to 169 (GE), Ser-200, 222 to 224 (SLH), and Asn-301 each bind S-adenosyl-L-methionine. Cys-344 serves as the catalytic S-methylcysteine intermediate.

This sequence belongs to the radical SAM superfamily. RlmN family. Requires [4Fe-4S] cluster as cofactor.

Its subcellular location is the cytoplasm. It catalyses the reaction adenosine(2503) in 23S rRNA + 2 reduced [2Fe-2S]-[ferredoxin] + 2 S-adenosyl-L-methionine = 2-methyladenosine(2503) in 23S rRNA + 5'-deoxyadenosine + L-methionine + 2 oxidized [2Fe-2S]-[ferredoxin] + S-adenosyl-L-homocysteine. It carries out the reaction adenosine(37) in tRNA + 2 reduced [2Fe-2S]-[ferredoxin] + 2 S-adenosyl-L-methionine = 2-methyladenosine(37) in tRNA + 5'-deoxyadenosine + L-methionine + 2 oxidized [2Fe-2S]-[ferredoxin] + S-adenosyl-L-homocysteine. In terms of biological role, specifically methylates position 2 of adenine 2503 in 23S rRNA and position 2 of adenine 37 in tRNAs. m2A2503 modification seems to play a crucial role in the proofreading step occurring at the peptidyl transferase center and thus would serve to optimize ribosomal fidelity. The polypeptide is Dual-specificity RNA methyltransferase RlmN (Vibrio parahaemolyticus serotype O3:K6 (strain RIMD 2210633)).